The sequence spans 385 residues: Protein pelota homolog (385 aa).

Belongs to the eukaryotic release factor 1 family. Pelota subfamily. As to quaternary structure, component of the Pelota-HBS1L complex, also named Dom34-Hbs1 complex, composed of PELO and HBS1L. The cofactor is a divalent metal cation.

The protein localises to the cytoplasm. In terms of biological role, component of the Pelota-HBS1L complex, a complex that recognizes stalled ribosomes and triggers the No-Go Decay (NGD) pathway. In the Pelota-HBS1L complex, PELO recognizes ribosomes stalled at the 3' end of an mRNA and engages stalled ribosomes by destabilizing mRNA in the mRNA channel. Following mRNA extraction from stalled ribosomes by the SKI complex, the Pelota-HBS1L complex promotes recruitment of ABCE1, which drives the disassembly of stalled ribosomes, followed by degradation of damaged mRNAs as part of the NGD pathway. This chain is Protein pelota homolog (pelo), found in Danio rerio (Zebrafish).